A 383-amino-acid chain; its full sequence is UDP-N-acetylglucosamine--N-acetylmuramyl-(pentapeptide) pyrophosphoryl-undecaprenol N-acetylglucosamine transferase (383 aa).

UDP-N-acetyl-alpha-D-glucosamine-binding positions include 10–12 (TGG), N124, R165, S190, I245, and Q290. The interval 363 to 383 (SPFGQAREPGQKPARPPDPAS) is disordered.

Belongs to the glycosyltransferase 28 family. MurG subfamily.

It localises to the cell inner membrane. The catalysed reaction is di-trans,octa-cis-undecaprenyl diphospho-N-acetyl-alpha-D-muramoyl-L-alanyl-D-glutamyl-meso-2,6-diaminopimeloyl-D-alanyl-D-alanine + UDP-N-acetyl-alpha-D-glucosamine = di-trans,octa-cis-undecaprenyl diphospho-[N-acetyl-alpha-D-glucosaminyl-(1-&gt;4)]-N-acetyl-alpha-D-muramoyl-L-alanyl-D-glutamyl-meso-2,6-diaminopimeloyl-D-alanyl-D-alanine + UDP + H(+). The protein operates within cell wall biogenesis; peptidoglycan biosynthesis. Cell wall formation. Catalyzes the transfer of a GlcNAc subunit on undecaprenyl-pyrophosphoryl-MurNAc-pentapeptide (lipid intermediate I) to form undecaprenyl-pyrophosphoryl-MurNAc-(pentapeptide)GlcNAc (lipid intermediate II). The chain is UDP-N-acetylglucosamine--N-acetylmuramyl-(pentapeptide) pyrophosphoryl-undecaprenol N-acetylglucosamine transferase from Anaeromyxobacter dehalogenans (strain 2CP-1 / ATCC BAA-258).